We begin with the raw amino-acid sequence, 476 residues long: Endonuclease SceI small subunit (476 aa).

The protein belongs to the LAGLIDADG endonuclease family. As to quaternary structure, endonuclease SceI (Endo.SceI) is a heterodimer of ENS2 and SSC1. The N-terminus is blocked.

The protein localises to the mitochondrion. Its function is as follows. Catalytic component of endonuclease SceI (Endo.SceI), which cleaves specifically at multiple sites on mitochondrial DNA and produces double-stranded breaks. This chain is Endonuclease SceI small subunit (ENS2), found in Saccharomyces cerevisiae (Baker's yeast).